The primary structure comprises 201 residues: Glycerol-3-phosphate acyltransferase (201 aa).

5 helical membrane-spanning segments follow: residues 5 to 25 (LLGALLVAAGYLAGSIPFGVV), 55 to 75 (KMGVLVLVLDAAKAIVPILVA), 87 to 107 (FWVTAVAVAAFVGHLFPVWLG), 118 to 138 (LGIFAVLAPWAALAGLVGYAV), and 164 to 184 (TYGPRHPVSWAGLAIALLIFV).

The protein belongs to the PlsY family. In terms of assembly, probably interacts with PlsX.

Its subcellular location is the cell inner membrane. It carries out the reaction an acyl phosphate + sn-glycerol 3-phosphate = a 1-acyl-sn-glycero-3-phosphate + phosphate. It functions in the pathway lipid metabolism; phospholipid metabolism. Its function is as follows. Catalyzes the transfer of an acyl group from acyl-phosphate (acyl-PO(4)) to glycerol-3-phosphate (G3P) to form lysophosphatidic acid (LPA). This enzyme utilizes acyl-phosphate as fatty acyl donor, but not acyl-CoA or acyl-ACP. This Anaeromyxobacter dehalogenans (strain 2CP-1 / ATCC BAA-258) protein is Glycerol-3-phosphate acyltransferase.